The following is a 320-amino-acid chain: Small ribosomal subunit protein mS35 (320 aa).

Positions 24–63 are disordered; it reads SVASPAAPRAGPRTASRSERPMRRKALPPRTEKMDTDQDW.

This sequence belongs to the mitochondrion-specific ribosomal protein mS35 family. As to quaternary structure, component of the mitochondrial ribosome small subunit (28S) which comprises a 12S rRNA and about 30 distinct proteins.

It localises to the mitochondrion. This chain is Small ribosomal subunit protein mS35, found in Mus musculus (Mouse).